Consider the following 361-residue polypeptide: KDEL-tailed cysteine endopeptidase CEP2 (361 aa).

The N-terminal stretch at 1-20 is a signal peptide; sequence MKKLLLIFLFSLVILQTACG. The propeptide at 21-127 is activation peptide; it reads FDYDDKEIES…FMYDHENLSK (107 aa). N-linked (GlcNAc...) asparagine glycans are attached at residues Asn75 and Asn124. 3 disulfide bridges follow: Cys149-Cys191, Cys183-Cys224, and Cys282-Cys333. Cys152 is an active-site residue. Catalysis depends on residues His288 and Asn308. Residues 358-361 carry the Prevents secretion from ER motif; that stretch reads KDEL.

The protein belongs to the peptidase C1 family. In terms of tissue distribution, expressed in roots, stems, rosette and cauline leaves, flowers, buds and green siliques. Found in the tip of young primary leaves, in very young root tips and at later stages in all tissues of lateral root, including the vascular bundle. Not expressed in lateral root primordia, while directly emerging through the epidermis.

Its subcellular location is the endoplasmic reticulum. Its function is as follows. Involved in the final stage of developmental programmed cell death and in intercalation of new cells. Cleaves extensins, thus probably supporting the final cell collapse. The sequence is that of KDEL-tailed cysteine endopeptidase CEP2 from Arabidopsis thaliana (Mouse-ear cress).